Reading from the N-terminus, the 29-residue chain is Cytochrome b6-f complex subunit 8 (29 aa).

A helical transmembrane segment spans residues 3-23 (IDVLGWVALLVVFTWSIAMVV).

Belongs to the PetN family. As to quaternary structure, the 4 large subunits of the cytochrome b6-f complex are cytochrome b6, subunit IV (17 kDa polypeptide, PetD), cytochrome f and the Rieske protein, while the 4 small subunits are PetG, PetL, PetM and PetN. The complex functions as a dimer.

The protein localises to the cellular thylakoid membrane. Component of the cytochrome b6-f complex, which mediates electron transfer between photosystem II (PSII) and photosystem I (PSI), cyclic electron flow around PSI, and state transitions. The polypeptide is Cytochrome b6-f complex subunit 8 (Mastigocladus laminosus (Fischerella sp.)).